Reading from the N-terminus, the 103-residue chain is N(4)-acetylcytidine amidohydrolase (103 aa).

The ASCH domain occupies 6–100; it reads ITFFQRFQDD…GESQFYVIEF (95 aa). Residue lysine 21 is the Proton acceptor of the active site. Catalysis depends on threonine 24, which acts as the Nucleophile. Glutamate 74 serves as the catalytic Proton donor.

Belongs to the N(4)-acetylcytidine amidohydrolase family.

The enzyme catalyses N(4)-acetylcytidine + H2O = cytidine + acetate + H(+). The catalysed reaction is N(4)-acetyl-2'-deoxycytidine + H2O = 2'-deoxycytidine + acetate + H(+). It catalyses the reaction N(4)-acetylcytosine + H2O = cytosine + acetate + H(+). Functionally, catalyzes the hydrolysis of N(4)-acetylcytidine (ac4C). The sequence is that of N(4)-acetylcytidine amidohydrolase from Klebsiella pneumoniae subsp. pneumoniae (strain ATCC 700721 / MGH 78578).